Reading from the N-terminus, the 789-residue chain is DNA replication helicase (789 aa).

64 to 71 serves as a coordination point for ATP; sequence GTAGAGKS.

It belongs to the herpesviridae helicase family. Associates with the primase and the primase-associated factor to form the helicase-primase complex.

The protein resides in the host nucleus. Functionally, component of the helicase/primase complex. Unwinds the DNA at the replication forks and generates single-stranded DNA for both leading and lagging strand synthesis. The primase synthesizes short RNA primers on the lagging strand that the polymerase elongates using dNTPs. Possesses helicase-like motifs and therefore may act as the helicase subunit of the complex. This is DNA replication helicase from Equus caballus (Horse).